Here is a 362-residue protein sequence, read N- to C-terminus: uncharacterized protein (362 aa).

The chain crosses the membrane as a helical span at residues 13–33; that stretch reads VLILSVGLNMLFLLLFYSAIF. In terms of domain architecture, LysM spans 314–357; that stretch reads EEYVVQDGDSLWLIAKRFGIPMDKIIQKNGLNHHRLFPGKVLKL.

The protein belongs to the chlamydial CPn_0593/CT_474/TC_0759 family.

Its subcellular location is the membrane. This is an uncharacterized protein from Chlamydia pneumoniae (Chlamydophila pneumoniae).